A 339-amino-acid chain; its full sequence is UDP-N-acetylglucosamine--N-acetylmuramyl-(pentapeptide) pyrophosphoryl-undecaprenol N-acetylglucosamine transferase (339 aa).

UDP-N-acetyl-alpha-D-glucosamine contacts are provided by residues Thr11–Gly13, Asn127, Arg170, Ser188, Ile235, and Gln280.

It belongs to the glycosyltransferase 28 family. MurG subfamily.

Its subcellular location is the cell inner membrane. The catalysed reaction is di-trans,octa-cis-undecaprenyl diphospho-N-acetyl-alpha-D-muramoyl-L-alanyl-D-glutamyl-meso-2,6-diaminopimeloyl-D-alanyl-D-alanine + UDP-N-acetyl-alpha-D-glucosamine = di-trans,octa-cis-undecaprenyl diphospho-[N-acetyl-alpha-D-glucosaminyl-(1-&gt;4)]-N-acetyl-alpha-D-muramoyl-L-alanyl-D-glutamyl-meso-2,6-diaminopimeloyl-D-alanyl-D-alanine + UDP + H(+). It functions in the pathway cell wall biogenesis; peptidoglycan biosynthesis. Cell wall formation. Catalyzes the transfer of a GlcNAc subunit on undecaprenyl-pyrophosphoryl-MurNAc-pentapeptide (lipid intermediate I) to form undecaprenyl-pyrophosphoryl-MurNAc-(pentapeptide)GlcNAc (lipid intermediate II). The polypeptide is UDP-N-acetylglucosamine--N-acetylmuramyl-(pentapeptide) pyrophosphoryl-undecaprenol N-acetylglucosamine transferase (Thermotoga maritima (strain ATCC 43589 / DSM 3109 / JCM 10099 / NBRC 100826 / MSB8)).